Here is a 278-residue protein sequence, read N- to C-terminus: Adenosylcobinamide-GDP ribazoletransferase (278 aa).

The next 7 helical transmembrane spans lie at 35 to 55 (VVGI…NFIL), 62 to 82 (AVLP…TGAL), 116 to 136 (GALA…SLTI), 141 to 161 (AAVY…VVSC), 185 to 205 (LIVA…MPFI), 222 to 242 (LIIV…SKLI), and 257 to 277 (LLEI…TFFI).

This sequence belongs to the CobS family. Requires Mg(2+) as cofactor.

It localises to the cell inner membrane. It catalyses the reaction alpha-ribazole + adenosylcob(III)inamide-GDP = adenosylcob(III)alamin + GMP + H(+). It carries out the reaction alpha-ribazole 5'-phosphate + adenosylcob(III)inamide-GDP = adenosylcob(III)alamin 5'-phosphate + GMP + H(+). It participates in cofactor biosynthesis; adenosylcobalamin biosynthesis; adenosylcobalamin from cob(II)yrinate a,c-diamide: step 7/7. Functionally, joins adenosylcobinamide-GDP and alpha-ribazole to generate adenosylcobalamin (Ado-cobalamin). Also synthesizes adenosylcobalamin 5'-phosphate from adenosylcobinamide-GDP and alpha-ribazole 5'-phosphate. This chain is Adenosylcobinamide-GDP ribazoletransferase, found in Fusobacterium nucleatum subsp. nucleatum (strain ATCC 25586 / DSM 15643 / BCRC 10681 / CIP 101130 / JCM 8532 / KCTC 2640 / LMG 13131 / VPI 4355).